Here is a 431-residue protein sequence, read N- to C-terminus: STE20-related kinase adapter protein alpha (431 aa).

Phosphoserine is present on residues Ser2 and Ser46. Disordered regions lie at residues 32 to 52 and 314 to 344; these read EQPPGDTRRKANEASSESIAS and PSRSIANPGLNDSLAAGSLRPSNGDSPSHPY. One can recognise a Protein kinase domain in the interval 69–379; sequence YELLTIIGKG…ASTLLNHSFF (311 aa). Residue Thr419 is modified to Phosphothreonine; by LKB1.

It belongs to the protein kinase superfamily. STE Ser/Thr protein kinase family. STE20 subfamily. Component of a trimeric complex composed of STK11/LKB1, STRAD (STRADA or STRADB) and CAB39/MO25 (CAB39/MO25alpha or CAB39L/MO25beta): the complex tethers STK11/LKB1 in the cytoplasm and stimulates its catalytic activity.

It is found in the nucleus. It localises to the cytoplasm. Functionally, pseudokinase which, in complex with CAB39/MO25 (CAB39/MO25alpha or CAB39L/MO25beta), binds to and activates STK11/LKB1. Adopts a closed conformation typical of active protein kinases and binds STK11/LKB1 as a pseudosubstrate, promoting conformational change of STK11/LKB1 in an active conformation. This Mus musculus (Mouse) protein is STE20-related kinase adapter protein alpha (Strada).